Reading from the N-terminus, the 432-residue chain is Histidinol dehydrogenase (432 aa).

NAD(+)-binding residues include tyrosine 130, glutamine 191, and asparagine 214. Substrate-binding residues include serine 237, glutamine 259, and histidine 262. Positions 259 and 262 each coordinate Zn(2+). Residues glutamate 327 and histidine 328 each act as proton acceptor in the active site. Positions 328, 361, 415, and 420 each coordinate substrate. Aspartate 361 is a binding site for Zn(2+). Histidine 420 provides a ligand contact to Zn(2+).

It belongs to the histidinol dehydrogenase family. Zn(2+) is required as a cofactor.

It carries out the reaction L-histidinol + 2 NAD(+) + H2O = L-histidine + 2 NADH + 3 H(+). The protein operates within amino-acid biosynthesis; L-histidine biosynthesis; L-histidine from 5-phospho-alpha-D-ribose 1-diphosphate: step 9/9. Catalyzes the sequential NAD-dependent oxidations of L-histidinol to L-histidinaldehyde and then to L-histidine. This is Histidinol dehydrogenase from Agrobacterium fabrum (strain C58 / ATCC 33970) (Agrobacterium tumefaciens (strain C58)).